A 237-amino-acid chain; its full sequence is Aliphatic sulfonates import ATP-binding protein SsuB 1 (237 aa).

Positions 5–221 constitute an ABC transporter domain; sequence LMDIRVEHKA…PRDRRDPLLA (217 aa). ATP is bound at residue 38 to 45; that stretch reads GPSGCGKS.

The protein belongs to the ABC transporter superfamily. Aliphatic sulfonates importer (TC 3.A.1.17.2) family. The complex is composed of two ATP-binding proteins (SsuB), two transmembrane proteins (SsuC) and a solute-binding protein (SsuA).

Its subcellular location is the cell inner membrane. It catalyses the reaction ATP + H2O + aliphatic sulfonate-[sulfonate-binding protein]Side 1 = ADP + phosphate + aliphatic sulfonateSide 2 + [sulfonate-binding protein]Side 1.. Its function is as follows. Part of the ABC transporter complex SsuABC involved in aliphatic sulfonates import. Responsible for energy coupling to the transport system. The protein is Aliphatic sulfonates import ATP-binding protein SsuB 1 of Pseudomonas syringae pv. syringae (strain B728a).